We begin with the raw amino-acid sequence, 350 residues long: Flap endonuclease 1 (350 aa).

The tract at residues 1–101 (MGVNIREVIP…LEIERRKRVK (101 aa)) is N-domain. Residues Asp-30, Asp-83, Glu-155, Glu-157, Asp-176, Asp-178, and Asp-239 each contribute to the Mg(2+) site. Residues 119–261 (AARRYAQMAA…TALKMVKAHR (143 aa)) are I-domain. The segment at 340–348 (QQMGLDAWL) is interaction with PCNA.

It belongs to the XPG/RAD2 endonuclease family. FEN1 subfamily. As to quaternary structure, interacts with PCNA. PCNA stimulates the nuclease activity without altering cleavage specificity. Requires Mg(2+) as cofactor.

Its function is as follows. Structure-specific nuclease with 5'-flap endonuclease and 5'-3' exonuclease activities involved in DNA replication and repair. During DNA replication, cleaves the 5'-overhanging flap structure that is generated by displacement synthesis when DNA polymerase encounters the 5'-end of a downstream Okazaki fragment. Binds the unpaired 3'-DNA end and kinks the DNA to facilitate 5' cleavage specificity. Cleaves one nucleotide into the double-stranded DNA from the junction in flap DNA, leaving a nick for ligation. Also involved in the base excision repair (BER) pathway. Acts as a genome stabilization factor that prevents flaps from equilibrating into structures that lead to duplications and deletions. Also possesses 5'-3' exonuclease activity on nicked or gapped double-stranded DNA. This Hyperthermus butylicus (strain DSM 5456 / JCM 9403 / PLM1-5) protein is Flap endonuclease 1.